A 132-amino-acid chain; its full sequence is Minor structural pilin EpdB (132 aa).

Positions 1 to 4 are excised as a propeptide; that stretch reads MSKG. The short motif at 9 to 19 is the QXSXEXXXL element; that stretch reads EFIVLFLALLV.

In terms of processing, the N-terminus is probably cleaved by the prepilin peptidase EppA, which recognizes the class III signal sequence.

Its subcellular location is the secreted. The protein resides in the cell surface. It is found in the fimbrium. In terms of biological role, minor component of the type IV-like pili. Essential for pili formation. The polypeptide is Minor structural pilin EpdB (Methanococcus maripaludis (strain DSM 14266 / JCM 13030 / NBRC 101832 / S2 / LL)).